A 1758-amino-acid chain; its full sequence is RanBP2-like and GRIP domain-containing protein 3 (1758 aa).

Ser21 carries the post-translational modification Phosphoserine. Residues Pro60 to Gln93 form a TPR 1 repeat. Residues Arg176–Arg229 adopt a coiled-coil conformation. A TPR 2 repeat occupies Gln584–Ile617. Residues Gly761–Ala805 are disordered. A compositionally biased stretch (low complexity) spans Ser779–Pro798. Residues Ala805–Ala837 adopt a coiled-coil conformation. Positions His1037 to Asp1173 constitute a RanBD1 1 domain. Disordered stretches follow at residues Val1216–Glu1248, Ala1307–Phe1335, and Asn1581–Ser1622. Over residues Ile1236–Pro1245 the composition is skewed to polar residues. Acidic residues predominate over residues Thr1318 to Arg1330. The RanBD1 2 domain occupies Tyr1334–Lys1470. Positions Asn1581–Glu1594 are enriched in polar residues. Basic and acidic residues predominate over residues Ser1595–Val1618. A GRIP domain is found at Gln1703–Val1753.

This Homo sapiens (Human) protein is RanBP2-like and GRIP domain-containing protein 3 (RGPD3).